The following is a 532-amino-acid chain: CTP synthase (532 aa).

The amidoligase domain stretch occupies residues 1 to 267 (MTKYIFVTGG…DDIVLEHLQL (267 aa)). Ser-13 is a binding site for CTP. Ser-13 provides a ligand contact to UTP. 14 to 19 (SIGKGI) provides a ligand contact to ATP. Tyr-54 provides a ligand contact to L-glutamine. Position 71 (Asp-71) interacts with ATP. Residues Asp-71 and Glu-141 each contribute to the Mg(2+) site. CTP-binding positions include 148–150 (DIE), 188–193 (KTKPTQ), and Lys-224. UTP-binding positions include 188–193 (KTKPTQ) and Lys-224. One can recognise a Glutamine amidotransferase type-1 domain in the interval 292-532 (RIGLVGKYVS…DFVGAALNNK (241 aa)). Gly-354 lines the L-glutamine pocket. Catalysis depends on Cys-381, which acts as the Nucleophile; for glutamine hydrolysis. Residues 382-385 (LGMQ), Glu-405, and Arg-462 contribute to the L-glutamine site. Residues His-507 and Glu-509 contribute to the active site.

The protein belongs to the CTP synthase family. In terms of assembly, homotetramer.

The enzyme catalyses UTP + L-glutamine + ATP + H2O = CTP + L-glutamate + ADP + phosphate + 2 H(+). It carries out the reaction L-glutamine + H2O = L-glutamate + NH4(+). It catalyses the reaction UTP + NH4(+) + ATP = CTP + ADP + phosphate + 2 H(+). The protein operates within pyrimidine metabolism; CTP biosynthesis via de novo pathway; CTP from UDP: step 2/2. With respect to regulation, allosterically activated by GTP, when glutamine is the substrate; GTP has no effect on the reaction when ammonia is the substrate. The allosteric effector GTP functions by stabilizing the protein conformation that binds the tetrahedral intermediate(s) formed during glutamine hydrolysis. Inhibited by the product CTP, via allosteric rather than competitive inhibition. Functionally, catalyzes the ATP-dependent amination of UTP to CTP with either L-glutamine or ammonia as the source of nitrogen. Regulates intracellular CTP levels through interactions with the four ribonucleotide triphosphates. The polypeptide is CTP synthase (Listeria monocytogenes serotype 4b (strain F2365)).